The sequence spans 417 residues: PRKCA-binding protein (417 aa).

The PDZ domain occupies 22–105 (KVTLQKDAQN…EVTIHYNKLQ (84 aa)). 2 residues coordinate Zn(2+): C44 and C46. T82 is subject to Phosphothreonine. In terms of domain architecture, AH spans 144 to 357 (LCNDGLVKRL…CYSVLRDADV (214 aa)). The interval 375–417 (QDEFTDGEDEEDEDEEDTAAGEPPRDSRGAAGPLDKGGSWCNS) is disordered. Over residues 377–393 (EFTDGEDEEDEDEEDTA) the composition is skewed to acidic residues. Residue C415 is the site of S-palmitoyl cysteine; by DHHC8 attachment.

Monomer and homodimer. Interacts with CXADR. Interacts presynaptically with the glutamate receptors GRIA2, GRIA3, GRIK3, isoform 3 of GRIA4, isoform A of GRM4, GRM7 and GRM8; with NAPA and NAPB; and with BTG2. The interaction with NAPA and NAPB disrupts the interaction with GRIA2, conducting to the internalization of GRIA2. Interacts with PRKCA; with the amine transporters SLC6A2 and SLC6A3; with the channels ASIC1 and ASIC2; with the GTP-binding proteins ARF1 and ARF3; with the ephrin receptor tyrosine kinases EPHA7, EPHB1 and EPHB2; with ERBB2 and through its PDZ domain with the C-terminal tail of PRLHR. Interacts with UNC5A. Interacts (via AH domain) with NCS1/FREQ; in a calcium-dependent manner. Interacts with F-actin and associates with the ARP2/3 complex. Interacts (via PDZ domain) with ARF1 (activated); the interaction blocks Arp2/3 complex inhibition. Interacts with SORCS3. Phosphorylation at Thr-82 appears to inhibit the interaction with AMPA receptors. In terms of processing, palmitoylation on Cys-415 is essential for long-term synaptic depression (LTD).

It is found in the cytoplasm. It localises to the perinuclear region. The protein resides in the membrane. Its subcellular location is the postsynaptic density. The protein localises to the synapse. It is found in the synaptosome. It localises to the cytoskeleton. Probable adapter protein that bind to and organize the subcellular localization of a variety of membrane proteins containing some PDZ recognition sequence. Involved in the clustering of various receptors, possibly by acting at the receptor internalization level. Plays a role in synaptic plasticity by regulating the trafficking and internalization of AMPA receptors. May be regulated upon PRKCA activation. May regulate ASIC1/ASIC3 channel. Regulates actin polymerization by inhibiting the actin-nucleating activity of the Arp2/3 complex; the function is competitive with nucleation promoting factors and is linked to neuronal morphology regulation and AMPA receptor (AMPAR) endocytosis. Via interaction with the Arp2/3 complex involved in regulation of synaptic plasicity of excitatory synapses and required for spine shrinkage during long-term depression (LTD). Involved in regulation of astrocyte morphology, antagonistic to Arp2/3 complex activator WASL/N-WASP function. The chain is PRKCA-binding protein (PICK1) from Bos taurus (Bovine).